Consider the following 431-residue polypeptide: ATP-dependent protease ATPase subunit HslU (431 aa).

Residues V18, 60-65, D244, E309, and R381 each bind ATP; that span reads GVGKTE.

The protein belongs to the ClpX chaperone family. HslU subfamily. A double ring-shaped homohexamer of HslV is capped on each side by a ring-shaped HslU homohexamer. The assembly of the HslU/HslV complex is dependent on binding of ATP.

It is found in the cytoplasm. In terms of biological role, ATPase subunit of a proteasome-like degradation complex; this subunit has chaperone activity. The binding of ATP and its subsequent hydrolysis by HslU are essential for unfolding of protein substrates subsequently hydrolyzed by HslV. HslU recognizes the N-terminal part of its protein substrates and unfolds these before they are guided to HslV for hydrolysis. The sequence is that of ATP-dependent protease ATPase subunit HslU from Caulobacter sp. (strain K31).